The sequence spans 358 residues: MLYHLLYPLAADYKLFNVFKYLTFRSIYAMITALLLAFIVGPWVVRKLEALQARQVIRTDGPESHLKKQGTPTMGGVLILVCIVVPTLLWADLKNVFIWLTLLIIVGYGVLGFVDDYKKVVEKNPKGLSPRQKMFWQVLLAAGVGIFLFYLPGFSTELYLPFFKRVHPELGILFIPFVTLVIVGASNAVNLTDGLDGLAIGPVAINAGTYLLFCYIAGNARLSGYLQIPYVPGAGELAVLCGAMVGAGLGFLWYNSYPAEVFMGDVGSLSLGGALGTLAVLTKQEILLVIVGGVFVVEALSVIFQVGSYKYRGKRIFRMAPIHHHFELKGVAEPKIIVRFWIITIILALVAISTLKMR.

10 helical membrane-spanning segments follow: residues 24–44 (FRSI…GPWV), 73–93 (TMGG…WADL), 95–115 (NVFI…GFVD), 134–154 (MFWQ…LPGF), 169–189 (ELGI…SNAV), 197–217 (GLAI…CYIA), 233–253 (GAGE…GFLW), 261–281 (VFMG…LAVL), 286–306 (ILLV…IFQV), and 335–355 (KIIV…ISTL).

Belongs to the glycosyltransferase 4 family. MraY subfamily. Requires Mg(2+) as cofactor.

The protein resides in the cell inner membrane. The enzyme catalyses UDP-N-acetyl-alpha-D-muramoyl-L-alanyl-gamma-D-glutamyl-meso-2,6-diaminopimeloyl-D-alanyl-D-alanine + di-trans,octa-cis-undecaprenyl phosphate = di-trans,octa-cis-undecaprenyl diphospho-N-acetyl-alpha-D-muramoyl-L-alanyl-D-glutamyl-meso-2,6-diaminopimeloyl-D-alanyl-D-alanine + UMP. It participates in cell wall biogenesis; peptidoglycan biosynthesis. Catalyzes the initial step of the lipid cycle reactions in the biosynthesis of the cell wall peptidoglycan: transfers peptidoglycan precursor phospho-MurNAc-pentapeptide from UDP-MurNAc-pentapeptide onto the lipid carrier undecaprenyl phosphate, yielding undecaprenyl-pyrophosphoryl-MurNAc-pentapeptide, known as lipid I. This chain is Phospho-N-acetylmuramoyl-pentapeptide-transferase, found in Geobacter sp. (strain M21).